The sequence spans 364 residues: UDP-N-acetylglucosamine--N-acetylmuramyl-(pentapeptide) pyrophosphoryl-undecaprenol N-acetylglucosamine transferase (364 aa).

UDP-N-acetyl-alpha-D-glucosamine-binding positions include 16–18 (TGG), asparagine 128, arginine 166, serine 195, isoleucine 249, and glutamine 294.

This sequence belongs to the glycosyltransferase 28 family. MurG subfamily.

It is found in the cell inner membrane. The enzyme catalyses di-trans,octa-cis-undecaprenyl diphospho-N-acetyl-alpha-D-muramoyl-L-alanyl-D-glutamyl-meso-2,6-diaminopimeloyl-D-alanyl-D-alanine + UDP-N-acetyl-alpha-D-glucosamine = di-trans,octa-cis-undecaprenyl diphospho-[N-acetyl-alpha-D-glucosaminyl-(1-&gt;4)]-N-acetyl-alpha-D-muramoyl-L-alanyl-D-glutamyl-meso-2,6-diaminopimeloyl-D-alanyl-D-alanine + UDP + H(+). The protein operates within cell wall biogenesis; peptidoglycan biosynthesis. Cell wall formation. Catalyzes the transfer of a GlcNAc subunit on undecaprenyl-pyrophosphoryl-MurNAc-pentapeptide (lipid intermediate I) to form undecaprenyl-pyrophosphoryl-MurNAc-(pentapeptide)GlcNAc (lipid intermediate II). The sequence is that of UDP-N-acetylglucosamine--N-acetylmuramyl-(pentapeptide) pyrophosphoryl-undecaprenol N-acetylglucosamine transferase from Chromohalobacter salexigens (strain ATCC BAA-138 / DSM 3043 / CIP 106854 / NCIMB 13768 / 1H11).